A 197-amino-acid chain; its full sequence is Holliday junction branch migration complex subunit RuvA (197 aa).

Positions 1-64 (MIGRLRGIVA…EDSVSLYGFL (64 aa)) are domain I. Residues 65-143 (REGERRLFRD…QFGAGGALPT (79 aa)) are domain II. Residues 144–153 (GSGPAPADPL) form a flexible linker region. The segment at 153–197 (LSDATVALQQLGYKPAEAARMAREAFNEGDEVAIVIRKALQSALR) is domain III.

This sequence belongs to the RuvA family. Homotetramer. Forms an RuvA(8)-RuvB(12)-Holliday junction (HJ) complex. HJ DNA is sandwiched between 2 RuvA tetramers; dsDNA enters through RuvA and exits via RuvB. An RuvB hexamer assembles on each DNA strand where it exits the tetramer. Each RuvB hexamer is contacted by two RuvA subunits (via domain III) on 2 adjacent RuvB subunits; this complex drives branch migration. In the full resolvosome a probable DNA-RuvA(4)-RuvB(12)-RuvC(2) complex forms which resolves the HJ.

Its subcellular location is the cytoplasm. In terms of biological role, the RuvA-RuvB-RuvC complex processes Holliday junction (HJ) DNA during genetic recombination and DNA repair, while the RuvA-RuvB complex plays an important role in the rescue of blocked DNA replication forks via replication fork reversal (RFR). RuvA specifically binds to HJ cruciform DNA, conferring on it an open structure. The RuvB hexamer acts as an ATP-dependent pump, pulling dsDNA into and through the RuvAB complex. HJ branch migration allows RuvC to scan DNA until it finds its consensus sequence, where it cleaves and resolves the cruciform DNA. The polypeptide is Holliday junction branch migration complex subunit RuvA (Stenotrophomonas maltophilia (strain R551-3)).